We begin with the raw amino-acid sequence, 396 residues long: Elongation factor Tu (396 aa).

One can recognise a tr-type G domain in the interval 10 to 206 (KPHVNVGTIG…ALDSYIPEPT (197 aa)). The interval 19-26 (GHVDHGKT) is G1. 19–26 (GHVDHGKT) is a binding site for GTP. Thr-26 provides a ligand contact to Mg(2+). The G2 stretch occupies residues 60 to 64 (GITIS). Residues 81-84 (DCPG) are G3. GTP-binding positions include 81–85 (DCPGH) and 136–139 (NKAD). Residues 136-139 (NKAD) form a G4 region. Residues 174 to 176 (SAL) are G5.

The protein belongs to the TRAFAC class translation factor GTPase superfamily. Classic translation factor GTPase family. EF-Tu/EF-1A subfamily. In terms of assembly, monomer.

Its subcellular location is the cytoplasm. It catalyses the reaction GTP + H2O = GDP + phosphate + H(+). Its function is as follows. GTP hydrolase that promotes the GTP-dependent binding of aminoacyl-tRNA to the A-site of ribosomes during protein biosynthesis. The protein is Elongation factor Tu of Hydrogenovibrio crunogenus (strain DSM 25203 / XCL-2) (Thiomicrospira crunogena).